The chain runs to 175 residues: Type-2 ice-structuring protein (175 aa).

The N-terminal stretch at 1-16 is a signal peptide; it reads MLAALLVCAMVALTRA. Residues 17 to 33 constitute a propeptide that is removed on maturation; that stretch reads ANGDTGKEAVMTGSSGK. A C-type lectin domain is found at 36 to 163; that stretch reads TECPTDWKMF…LHASVCAKPA (128 aa). 5 disulfide bridges follow: cysteine 38–cysteine 49, cysteine 66–cysteine 159, cysteine 103–cysteine 134, cysteine 123–cysteine 145, and cysteine 135–cysteine 151.

The protein resides in the secreted. Functionally, antifreeze proteins lower the blood freezing point. The chain is Type-2 ice-structuring protein from Osmerus mordax (Rainbow smelt).